Here is a 118-residue protein sequence, read N- to C-terminus: Large ribosomal subunit protein bL19 (118 aa).

The protein belongs to the bacterial ribosomal protein bL19 family.

Functionally, this protein is located at the 30S-50S ribosomal subunit interface and may play a role in the structure and function of the aminoacyl-tRNA binding site. The sequence is that of Large ribosomal subunit protein bL19 from Campylobacter curvus (strain 525.92).